A 61-amino-acid polypeptide reads, in one-letter code: Probable tautomerase SERP0934 (61 aa).

The active-site Proton acceptor; via imino nitrogen is the Pro2.

Belongs to the 4-oxalocrotonate tautomerase family.

This is Probable tautomerase SERP0934 from Staphylococcus epidermidis (strain ATCC 35984 / DSM 28319 / BCRC 17069 / CCUG 31568 / BM 3577 / RP62A).